Reading from the N-terminus, the 396-residue chain is MTEHSIRNFSINFGPQHPAAHGVLRLVLELDGEIVERVDPHIGLLHRGTEKLIEVKTYLQATPYFDRLDYVAPMNQEHAFCLAVEKLLGIEVPRRAKLIRTLFCEIGRLLSHLLNVTTQAMDVGALTPPLWGFEEREKLMIFYERASGARLHANYFRPGGVHQDLPPGLIDDIEAFCDPFLQVVDDLDALVIGNRIFKQRNVDIGIVTVDAAMAWGFSGVMLRGSGIPWDLRRAQPYEAYEEMEFDVPVGKNGDTYDRQVIRMEEMRQSVRIMKQCLAKLRAPDGQGPVTTQDGKVAPPSRREMKRSMEALIHHFKLYTEGFHVPAGEVYAAVEAPKGEFGVYLVADGTNKPYRCKIRAPGFAHLQAMDWMCRGHMLADVSCILGTLDIVFGEVDR.

This sequence belongs to the complex I 49 kDa subunit family. As to quaternary structure, NDH-1 is composed of 14 different subunits. Subunits NuoB, C, D, E, F, and G constitute the peripheral sector of the complex.

Its subcellular location is the cell inner membrane. It catalyses the reaction a quinone + NADH + 5 H(+)(in) = a quinol + NAD(+) + 4 H(+)(out). Functionally, NDH-1 shuttles electrons from NADH, via FMN and iron-sulfur (Fe-S) centers, to quinones in the respiratory chain. The immediate electron acceptor for the enzyme in this species is believed to be ubiquinone. Couples the redox reaction to proton translocation (for every two electrons transferred, four hydrogen ions are translocated across the cytoplasmic membrane), and thus conserves the redox energy in a proton gradient. The protein is NADH-quinone oxidoreductase subunit D of Methylobacterium sp. (strain 4-46).